The chain runs to 380 residues: GDSL esterase/lipase At3g26430 (380 aa).

An N-terminal signal peptide occupies residues 1–25 (METNLLLVKCVLLASCLIHPRACSP). Ser-38 functions as the Nucleophile in the catalytic mechanism. 3 N-linked (GlcNAc...) asparagine glycosylation sites follow: Asn-97, Asn-115, and Asn-183. Residues Asp-346 and His-349 contribute to the active site.

Belongs to the 'GDSL' lipolytic enzyme family.

It is found in the secreted. The catalysed reaction is hexadecanoate ester + H2O = an aliphatic alcohol + hexadecanoate + H(+). The enzyme catalyses a butanoate ester + H2O = an aliphatic alcohol + butanoate + H(+). Its activity is regulated as follows. Lipase activity is inhibited by phenylmethylsulfonyl fluoride (PMSF), but not neostigmine bromide (NB). Its function is as follows. Lipase that can hydrolyze p-nitrophenyl butyrate and p-nitrophenyl palmitate in vitro. Possesses low activity against p-nitrophenyl acetate. Substrate preference is p-nitrophenyl palmitate &gt; p-nitrophenyl butyrate &gt;&gt; p-nitrophenyl acetate. Lacks cholinesterase activity. The chain is GDSL esterase/lipase At3g26430 from Arabidopsis thaliana (Mouse-ear cress).